A 518-amino-acid polypeptide reads, in one-letter code: 2,3-bisphosphoglycerate-independent phosphoglycerate mutase (518 aa).

The Mn(2+) site is built by Asp-14 and Ser-64. Catalysis depends on Ser-64, which acts as the Phosphoserine intermediate. Substrate contacts are provided by residues His-125, 155-156 (RD), Arg-187, Arg-193, 264-267 (RPDR), and Lys-337. 5 residues coordinate Mn(2+): Asp-404, His-408, Asp-445, His-446, and His-467.

It belongs to the BPG-independent phosphoglycerate mutase family. The cofactor is Mn(2+).

The enzyme catalyses (2R)-2-phosphoglycerate = (2R)-3-phosphoglycerate. It functions in the pathway carbohydrate degradation; glycolysis; pyruvate from D-glyceraldehyde 3-phosphate: step 3/5. In terms of biological role, catalyzes the interconversion of 2-phosphoglycerate and 3-phosphoglycerate. In Methanococcoides burtonii (strain DSM 6242 / NBRC 107633 / OCM 468 / ACE-M), this protein is 2,3-bisphosphoglycerate-independent phosphoglycerate mutase.